Consider the following 257-residue polypeptide: 1-acyl-sn-glycerol-3-phosphate acyltransferase (257 aa).

Residues 10–30 traverse the membrane as a helical segment; that stretch reads VLFYLLLSASAFVWGTLSFFI. An HXXXXD motif motif is present at residues 82–87; sequence HQSTWE. Residues 105–125 traverse the membrane as a helical segment; that stretch reads ELLYVPFFGWALALLKPIAID.

The protein belongs to the 1-acyl-sn-glycerol-3-phosphate acyltransferase family.

It is found in the cell inner membrane. The catalysed reaction is a 1-acyl-sn-glycero-3-phosphate + an acyl-CoA = a 1,2-diacyl-sn-glycero-3-phosphate + CoA. It participates in phospholipid metabolism; CDP-diacylglycerol biosynthesis; CDP-diacylglycerol from sn-glycerol 3-phosphate: step 2/3. Functionally, converts lysophosphatidic acid (LPA) into phosphatidic acid by incorporating acyl moiety at the 2 position. The sequence is that of 1-acyl-sn-glycerol-3-phosphate acyltransferase from Pseudomonas aeruginosa (strain ATCC 15692 / DSM 22644 / CIP 104116 / JCM 14847 / LMG 12228 / 1C / PRS 101 / PAO1).